Here is a 119-residue protein sequence, read N- to C-terminus: Small ribosomal subunit protein uS13 (119 aa).

The tract at residues 96–119 is disordered; the sequence is PVRGQRTKTNARTRKGPRKLIKSR.

The protein belongs to the universal ribosomal protein uS13 family. In terms of assembly, part of the 30S ribosomal subunit. Forms a loose heterodimer with protein S19. Forms two bridges to the 50S subunit in the 70S ribosome.

Functionally, located at the top of the head of the 30S subunit, it contacts several helices of the 16S rRNA. In the 70S ribosome it contacts the 23S rRNA (bridge B1a) and protein L5 of the 50S subunit (bridge B1b), connecting the 2 subunits; these bridges are implicated in subunit movement. Contacts the tRNAs in the A and P-sites. The polypeptide is Small ribosomal subunit protein uS13 (Buchnera aphidicola subsp. Cinara cedri (strain Cc)).